A 150-amino-acid chain; its full sequence is MKYQQLENLESGWKWKYLVKKHREGELITRYIEASAAQEAVDVLLSLENEPVLVNGWIDKHMNPELVNRMKQTIRARRKRHFNAEHQHTRKKSIDLEFIVWQRLAGLAQRRGKTLSETIVQLIEDAENKEKYANKMSSLKLDLQALLGKE.

Belongs to the MatP family. As to quaternary structure, homodimer.

It localises to the cytoplasm. Its function is as follows. Required for spatial organization of the terminus region of the chromosome (Ter macrodomain) during the cell cycle. Prevents early segregation of duplicated Ter macrodomains during cell division. Binds specifically to matS, which is a 13 bp signature motif repeated within the Ter macrodomain. This chain is Macrodomain Ter protein, found in Shigella boydii serotype 18 (strain CDC 3083-94 / BS512).